The primary structure comprises 215 residues: MPAFNRLLPLASLVLIYWVRVCFPVCVEVPSETEAVQGNSMKLRCISCMKREEVEATTVVEWFYRPEGGKDFLIYEYRNGHQEVESPFQGRLQWNGSKDLQDVSITVLNVTLNDSGLYTCNVSREFEFEAHRPFVKTTRLIPLRVTEEAGEDFTSVVSEIMMYILLVFLTLWLFIEMIYCYRKVSKAEEAAQENASDYLAIPSENKENSVVPVEE.

The N-terminal stretch at 1–24 (MPAFNRLLPLASLVLIYWVRVCFP) is a signal peptide. One can recognise an Ig-like C2-type domain in the interval 25–138 (VCVEVPSETE…EAHRPFVKTT (114 aa)). Topologically, residues 25-156 (VCVEVPSETE…EEAGEDFTSV (132 aa)) are extracellular. Disulfide bonds link Cys26–Cys48 and Cys45–Cys120. 4 N-linked (GlcNAc...) asparagine glycosylation sites follow: Asn95, Asn109, Asn113, and Asn121. Residues 157-178 (VSEIMMYILLVFLTLWLFIEMI) traverse the membrane as a helical segment. The Cytoplasmic portion of the chain corresponds to 179-215 (YCYRKVSKAEEAAQENASDYLAIPSENKENSVVPVEE).

Belongs to the sodium channel auxiliary subunit SCN3B (TC 8.A.17) family. In terms of assembly, a voltage-gated sodium (Nav) channel consists of an ion-conducting pore-forming alpha subunit functional on its own that is regulated by one or more beta subunits. Forms homodimers and homotrimers. SCN3B is non-covalently associated with alpha subunits and induces the formation of alpha subunit oligomers, including trimers. Interacts with SCN5A/Nav1.5; regulatory subunit of SCN5A/Nav1.5. Interacts with SCN7A/Nav2.1; probable regulatory subunit of SCN7A/Nav2.1. Interacts with SCN10A; regulatory subunit of SCN10A/Nav1.8. Interacts with NFASC; probably involved in targeting the sodium channels to the nodes of Ranvier. Intramolecular disulfide bonds favor the voltage-gated sodium channel oligomeric complex assembly. In terms of processing, N-glycosylated.

It localises to the cell membrane. Functionally, regulatory subunit of multiple voltage-gated sodium (Nav) channels directly mediating the depolarization of excitable membranes. Navs, also called VGSCs (voltage-gated sodium channels) or VDSCs (voltage-dependent sodium channels), operate by switching between closed and open conformations depending on the voltage difference across the membrane. In the open conformation they allow Na(+) ions to selectively pass through the pore, along their electrochemical gradient. The influx of Na+ ions provokes membrane depolarization, initiating the propagation of electrical signals throughout cells and tissues. The accessory beta subunits participate in localization and functional modulation of the Nav channels. Modulates the activity of SCN2A/Nav1.2, causing a hyperpolarizing shift in the voltage-dependence of inactivation of the channel and increasing the fraction of channels operating in the fast gating mode. Modulates the activity of SCN5A/Nav1.5. Could also regulate the atypical sodium channel SCN7A/Nav2.1. Modulates the activity of SCN10A/Nav1.8, regulating its oligomerization and accelerating the recovery from inactivation. The protein is Sodium channel regulatory subunit beta-3 of Mus musculus (Mouse).